Here is a 186-residue protein sequence, read N- to C-terminus: Large ribosomal subunit protein uL5 (186 aa).

It belongs to the universal ribosomal protein uL5 family. Part of the 50S ribosomal subunit; part of the 5S rRNA/L5/L18/L25 subcomplex. Contacts the 5S rRNA and the P site tRNA. Forms a bridge to the 30S subunit in the 70S ribosome.

Functionally, this is one of the proteins that bind and probably mediate the attachment of the 5S RNA into the large ribosomal subunit, where it forms part of the central protuberance. In the 70S ribosome it contacts protein S13 of the 30S subunit (bridge B1b), connecting the 2 subunits; this bridge is implicated in subunit movement. Contacts the P site tRNA; the 5S rRNA and some of its associated proteins might help stabilize positioning of ribosome-bound tRNAs. This chain is Large ribosomal subunit protein uL5, found in Cereibacter sphaeroides (strain ATCC 17023 / DSM 158 / JCM 6121 / CCUG 31486 / LMG 2827 / NBRC 12203 / NCIMB 8253 / ATH 2.4.1.) (Rhodobacter sphaeroides).